Consider the following 129-residue polypeptide: Large ribosomal subunit protein bL21 (129 aa).

This sequence belongs to the bacterial ribosomal protein bL21 family. As to quaternary structure, part of the 50S ribosomal subunit. Contacts protein L20.

Its function is as follows. This protein binds to 23S rRNA in the presence of protein L20. The protein is Large ribosomal subunit protein bL21 of Microcystis aeruginosa (strain NIES-843 / IAM M-2473).